The chain runs to 257 residues: Diphthine synthase (257 aa).

Residues leucine 9, aspartate 83, methionine 86, 111–112 (SI), and isoleucine 163 each bind S-adenosyl-L-methionine.

Belongs to the diphthine synthase family. In terms of assembly, homodimer.

The catalysed reaction is 2-[(3S)-amino-3-carboxypropyl]-L-histidyl-[translation elongation factor 2] + 3 S-adenosyl-L-methionine = diphthine-[translation elongation factor 2] + 3 S-adenosyl-L-homocysteine + 3 H(+). Its pathway is protein modification; peptidyl-diphthamide biosynthesis. In terms of biological role, S-adenosyl-L-methionine-dependent methyltransferase that catalyzes the trimethylation of the amino group of the modified target histidine residue in translation elongation factor 2 (EF-2), to form an intermediate called diphthine. The three successive methylation reactions represent the second step of diphthamide biosynthesis. This Thermoplasma acidophilum (strain ATCC 25905 / DSM 1728 / JCM 9062 / NBRC 15155 / AMRC-C165) protein is Diphthine synthase.